Here is a 290-residue protein sequence, read N- to C-terminus: Ribosomal RNA small subunit methyltransferase A (290 aa).

S-adenosyl-L-methionine contacts are provided by Asn27, Leu29, Gly54, Glu75, Asp100, and Asn125.

It belongs to the class I-like SAM-binding methyltransferase superfamily. rRNA adenine N(6)-methyltransferase family. RsmA subfamily.

It localises to the cytoplasm. The enzyme catalyses adenosine(1518)/adenosine(1519) in 16S rRNA + 4 S-adenosyl-L-methionine = N(6)-dimethyladenosine(1518)/N(6)-dimethyladenosine(1519) in 16S rRNA + 4 S-adenosyl-L-homocysteine + 4 H(+). Its function is as follows. Specifically dimethylates two adjacent adenosines (A1518 and A1519) in the loop of a conserved hairpin near the 3'-end of 16S rRNA in the 30S particle. May play a critical role in biogenesis of 30S subunits. The chain is Ribosomal RNA small subunit methyltransferase A from Streptococcus pyogenes serotype M5 (strain Manfredo).